Here is a 253-residue protein sequence, read N- to C-terminus: Small ribosomal subunit protein eS4 (253 aa).

The S4 RNA-binding domain maps to 43 to 114 (LPLLLIVRNV…YPVKFFKLHP (72 aa)).

It belongs to the eukaryotic ribosomal protein eS4 family.

This Aeropyrum pernix (strain ATCC 700893 / DSM 11879 / JCM 9820 / NBRC 100138 / K1) protein is Small ribosomal subunit protein eS4 (rps4e).